Reading from the N-terminus, the 492-residue chain is GTPase-activating protein MSB4 (492 aa).

The 221-residue stretch at 147-367 folds into the Rab-GAP TBC domain; sequence GIPAEWRGNA…RIWDCLFYEE (221 aa).

The protein resides in the cytoplasm. It is found in the bud. It localises to the bud neck. In terms of biological role, regulates exocytosis by functioning as a GAP for SEC4. Also required for efficient polarization of the actin patches. The polypeptide is GTPase-activating protein MSB4 (MSB4) (Saccharomyces cerevisiae (strain ATCC 204508 / S288c) (Baker's yeast)).